Consider the following 777-residue polypeptide: Zygote defective protein 12 (777 aa).

Basic and acidic residues-rich tracts occupy residues 1–10 and 18–36; these read MLDLTNKESE and KYEDSIDGREVGTSKPFKE. A disordered region spans residues 1 to 36; that stretch reads MLDLTNKESESSDNGNSKYEDSIDGREVGTSKPFKE. The interval 1-234 is interaction with dli-1; that stretch reads MLDLTNKESE…ESSGKLNGNG (234 aa). The Calponin-homology (CH) domain occupies 44-169; sequence QADLADMAVW…VTLAHIGKNA (126 aa). Disordered regions lie at residues 217–242 and 273–292; these read QSELNSLSESSGKLNGNGSSERRSNA and SFETAQHDMSSNSESGDISI. Positions 218–235 are enriched in low complexity; that stretch reads SELNSLSESSGKLNGNGS. Coiled coils occupy residues 236–399 and 425–688; these read SERR…HHVK and NTEL…QENR. The span at 273 to 288 shows a compositional bias: polar residues; the sequence is SFETAQHDMSSNSESG. Residues 747–767 form a helical membrane-spanning segment; the sequence is AMASILVLGFLVFIAWMFINI. The interaction with unc-84 stretch occupies residues 749-777; it reads ASILVLGFLVFIAWMFININSALNAPPNA.

It belongs to the hook family. Homodimer. Interacts with the dynein subunit dli-1 via its N-terminus. May interact with microtubules. Interacts with sut-2. Interacts (via C-terminus) with unc-84 (via C-terminus); the interaction is direct. As to expression, expressed in the syncytial gonad, oocytes, and in all cells during the development of the early embryo.

It is found in the nucleus membrane. The protein resides in the cytoplasm. Its subcellular location is the cytoskeleton. The protein localises to the microtubule organizing center. It localises to the centrosome. Its function is as follows. Cytoskeletal linker protein, which is essential for attachment of the centrosome to the nucleus. Required for dynein localization to the nuclear envelope. Forms a LINC (LInker of Nucleoskeleton and Cytoskeleton) complex together with unc-84, that may be involved in DNA damage repair. This chain is Zygote defective protein 12, found in Caenorhabditis elegans.